The primary structure comprises 159 residues: Biogenesis of lysosome-related organelles complex 1 subunit 2 (159 aa).

A disordered region spans residues 1 to 37; it reads MDKPTTSAAAAAAQDSNLLPDSPQHGPTLSSASSFEA. The span at 14–36 shows a compositional bias: polar residues; sequence QDSNLLPDSPQHGPTLSSASSFE. Positions 69-134 form a coiled coil; it reads EDYKLLEEMN…KLEAAAYKLD (66 aa).

Belongs to the BLOC1S2 family. As to quaternary structure, homodimer. Component of the biogenesis of lysosome-related organelles complex-1 (BLOC-1) composed of Blos1, Blos2, Blos3, Blos4, Dysb, Muted, Pldn and Snapin. Interacts with Snapin.

Functionally, component of the biogenesis of lysosome-related organelles complex-1 (BLOC-1) involved in pigment granule biogenesis. This Drosophila melanogaster (Fruit fly) protein is Biogenesis of lysosome-related organelles complex 1 subunit 2.